A 68-amino-acid polypeptide reads, in one-letter code: Cytotoxic linear peptide IsCT (68 aa).

A signal peptide spans 1–23; the sequence is MKTQFAILLVALVLFQMFAQSDA. Residue phenylalanine 36 is modified to Phenylalanine amide. The propeptide occupies 40–68; the sequence is GLSDLDGLDELFDGEISKADRDFLRELMR.

It belongs to the non-disulfide-bridged peptide (NDBP) superfamily. Short antimicrobial peptide (group 4) family. IsCTf is an enzymatic proteolytic cleavage product of IsCT by the proteases present in the venom. In terms of tissue distribution, expressed by the venom gland.

It localises to the secreted. The protein resides in the target cell membrane. In terms of biological role, shows weak hemolytic activity and antibacterial activity against both Gram-positive and Gram-negative bacteria probably by forming pores in the cell membrane. IsCT adopts an amphipathic alpha-helical structure. Its function is as follows. Shows neither hemolytic, nor antibacterial activities, probably because it cannot adopt amphipathic alpha-helical structure. This is Cytotoxic linear peptide IsCT from Opisthacanthus madagascariensis (Scorpion).